We begin with the raw amino-acid sequence, 906 residues long: Protein translocase subunit SecA (906 aa).

ATP-binding positions include glutamine 86, 104–108 (GEGKT), and aspartate 499. The segment at 863 to 887 (PVVSRIDPKDRNPDDPTSWGRVSRN) is disordered. Cysteine 890, cysteine 892, cysteine 901, and histidine 902 together coordinate Zn(2+).

Belongs to the SecA family. Monomer and homodimer. Part of the essential Sec protein translocation apparatus which comprises SecA, SecYEG and auxiliary proteins SecDF-YajC and YidC. Requires Zn(2+) as cofactor.

The protein resides in the cell inner membrane. It localises to the cytoplasm. The catalysed reaction is ATP + H2O + cellular proteinSide 1 = ADP + phosphate + cellular proteinSide 2.. Its function is as follows. Part of the Sec protein translocase complex. Interacts with the SecYEG preprotein conducting channel. Has a central role in coupling the hydrolysis of ATP to the transfer of proteins into and across the cell membrane, serving both as a receptor for the preprotein-SecB complex and as an ATP-driven molecular motor driving the stepwise translocation of polypeptide chains across the membrane. The sequence is that of Protein translocase subunit SecA from Rickettsia rickettsii (strain Iowa).